Here is a 77-residue protein sequence, read N- to C-terminus: MRTSGRLLLLCLAVGLLLESQAHPNADAGDATRDVGSDRTSVELSKMLKGWQAEKGQRKASAPKKFYVYPPVRRSFY.

The first 22 residues, Met1–Ala22, serve as a signal peptide directing secretion. Propeptides lie at residues His23–Arg58 and Arg73–Tyr77.

Belongs to the conotoxin H superfamily. Expressed by the venom duct.

Its subcellular location is the secreted. In terms of biological role, probable toxin. The chain is Conotoxin Vc1 from Conus victoriae (Queen Victoria cone).